We begin with the raw amino-acid sequence, 1033 residues long: Calcium-transporting ATPase 12, plasma membrane-type (1033 aa).

Met-1 is modified (N-acetylmethionine). Residues 1–152 lie on the Cytoplasmic side of the membrane; that stretch reads MRDLKEYDYS…NTYHKPPPKG (152 aa). The tract at residues 25–36 is interaction with calmodulin; it reads QRRWRFAYAAIY. Residue Ser-37 is modified to Phosphoserine. A helical membrane pass occupies residues 153-173; that stretch reads LLFFVYEAFKDLTILILLVCA. The Lumenal portion of the chain corresponds to 174 to 191; it reads IFSLGFGIKEHGIKEGWY. Residues 192–212 traverse the membrane as a helical segment; the sequence is EGGSIFVAVFLVIVVSALSNF. Over 213 to 341 the chain is Cytoplasmic; that stretch reads RQERQFDKLS…SERTPLQVRL (129 aa). A helical membrane pass occupies residues 342 to 361; it reads DTLTSTIGKIGLTVAALVLV. Residues 362–397 are Lumenal-facing; the sequence is VLLVRYFTGNTEKEGKREYNGSKTPVDTVVNSVVRI. The chain crosses the membrane as a helical span at residues 398–415; the sequence is VAAAVTIVVVAIPEGLPL. At 416 to 806 the chain is on the cytoplasmic side; sequence AVTLTLAYSM…KWGRCVYNNI (391 aa). The 4-aspartylphosphate intermediate role is filled by Asp-453. The Mg(2+) site is built by Asp-751 and Asp-755. Residues 807–825 traverse the membrane as a helical segment; that stretch reads QKFIQFQLTVNVAALVINF. Residues 826–836 are Lumenal-facing; it reads IAAISAGEVPL. The helical transmembrane segment at 837–857 threads the bilayer; sequence TAVQLLWVNLIMDTLGALALA. Residues 858-877 are Cytoplasmic-facing; that stretch reads TERPTNELLKRKPVGRTEAL. The helical transmembrane segment at 878–900 threads the bilayer; that stretch reads ITNVMWRNLLVQSLYQIAVLLIL. At 901 to 909 the chain is on the lumenal side; it reads QFKGMSIFS. The chain crosses the membrane as a helical span at residues 910–930; it reads VRKEVKDTLIFNTFVLCQVFN. The Cytoplasmic segment spans residues 931-948; that stretch reads EFNAREMEKKNVFKGLHR. A helical membrane pass occupies residues 949-970; it reads NRLFIGIIAITIVLQVIMVEFL. Over 971 to 980 the chain is Lumenal; the sequence is KKFADTVRLN. The chain crosses the membrane as a helical span at residues 981–1002; sequence GWQWGTCIALASLSWPIGFFTK. The Cytoplasmic segment spans residues 1003 to 1006; it reads FIPV.

This sequence belongs to the cation transport ATPase (P-type) (TC 3.A.3) family. Type IIB subfamily.

It localises to the membrane. The catalysed reaction is Ca(2+)(in) + ATP + H2O = Ca(2+)(out) + ADP + phosphate + H(+). With respect to regulation, activated by calmodulin. In terms of biological role, this magnesium-dependent enzyme catalyzes the hydrolysis of ATP coupled with the translocation of calcium from the cytosol out of the cell or into organelles. The sequence is that of Calcium-transporting ATPase 12, plasma membrane-type (ACA12) from Arabidopsis thaliana (Mouse-ear cress).